The primary structure comprises 337 residues: Fructose-1,6-bisphosphatase class 1 (337 aa).

The Mg(2+) site is built by glutamate 94, aspartate 116, leucine 118, and aspartate 119. Substrate contacts are provided by residues 119 to 122, asparagine 210, and lysine 276; that span reads DGSS. Mg(2+) is bound at residue glutamate 282.

This sequence belongs to the FBPase class 1 family. As to quaternary structure, homotetramer. It depends on Mg(2+) as a cofactor.

The protein localises to the cytoplasm. The enzyme catalyses beta-D-fructose 1,6-bisphosphate + H2O = beta-D-fructose 6-phosphate + phosphate. It functions in the pathway carbohydrate biosynthesis; gluconeogenesis. This Burkholderia vietnamiensis (strain G4 / LMG 22486) (Burkholderia cepacia (strain R1808)) protein is Fructose-1,6-bisphosphatase class 1.